The primary structure comprises 84 residues: Small ribosomal subunit protein uS17 (84 aa).

This sequence belongs to the universal ribosomal protein uS17 family. Part of the 30S ribosomal subunit.

In terms of biological role, one of the primary rRNA binding proteins, it binds specifically to the 5'-end of 16S ribosomal RNA. This Clostridium novyi (strain NT) protein is Small ribosomal subunit protein uS17.